The primary structure comprises 276 residues: MVLIEFLTGFFYLYGKRLFSISKVMDMICLDYYTIIPAPLAMMLAARIKNYDLMKRLHEWEISVDYALLVVDDVPSIDFCLSLGAKSPTRAQKRQLLRDNTFNPVYKYLMNCSGFPTRREKNIPCDVQCERLQKNIIKELVFNCSVLLEMVLHTEREYAYALHCAAKHNQLPILMYCWQQSTDAESILLKTCCSDKNINCFNYCILYGGAQNLNAAMVEAAKHDARMLINYCVMLGGRSLNEAKETAAMFGHIECAQHCFELQSYVMDALNADDAD.

This sequence belongs to the asfivirus MGF 360 family.

Plays a role in virus cell tropism, and may be required for efficient virus replication in macrophages. In Ornithodoros (relapsing fever ticks), this protein is Protein MGF 360-15R.